The chain runs to 183 residues: Nucleoside diphosphate kinase (183 aa).

Lysine 11 is a binding site for ATP. The tract at residues 56-88 (EWLRSAGQKLLKAYQELGIDPRAKIGTDDPVEV) is insert. Residues arginine 120, threonine 126, arginine 137, and asparagine 157 each contribute to the ATP site. Histidine 160 functions as the Pros-phosphohistidine intermediate in the catalytic mechanism.

This sequence belongs to the NDK family. It depends on Mg(2+) as a cofactor.

The protein resides in the cytoplasm. It catalyses the reaction a 2'-deoxyribonucleoside 5'-diphosphate + ATP = a 2'-deoxyribonucleoside 5'-triphosphate + ADP. It carries out the reaction a ribonucleoside 5'-diphosphate + ATP = a ribonucleoside 5'-triphosphate + ADP. In terms of biological role, major role in the synthesis of nucleoside triphosphates other than ATP. The ATP gamma phosphate is transferred to the NDP beta phosphate via a ping-pong mechanism, using a phosphorylated active-site intermediate. The protein is Nucleoside diphosphate kinase (ndk) of Pyrobaculum aerophilum (strain ATCC 51768 / DSM 7523 / JCM 9630 / CIP 104966 / NBRC 100827 / IM2).